The following is a 384-amino-acid chain: Deoxyguanosinetriphosphate triphosphohydrolase-like protein (384 aa).

The region spanning 62–198 (RLTHSLEVST…AALADDISYI (137 aa)) is the HD domain.

It belongs to the dGTPase family. Type 2 subfamily.

The sequence is that of Deoxyguanosinetriphosphate triphosphohydrolase-like protein from Rickettsia conorii (strain ATCC VR-613 / Malish 7).